The primary structure comprises 90 residues: Antitoxin epsilon (90 aa).

The protein belongs to the epsilon antitoxin family. As to quaternary structure, in the presence of the zeta toxin, forms an inactive PezA(2)PezT(2) heterotetramer.

Antitoxin component of a type II toxin-antitoxin (TA) system. Neutralizes the toxic effect of cognate zeta toxin. Part of a postsegregational killing (PSK) system involved in the killing of plasmid-free cells. Continuous synthesis of the epsilon antitoxin is required to counteract the zeta toxin. This Streptococcus agalactiae protein is Antitoxin epsilon.